The following is a 156-amino-acid chain: FAD synthase (156 aa).

ATP-binding positions include 9-10 (TF), 14-17 (HPGH), asparagine 92, and histidine 119.

Belongs to the archaeal FAD synthase family. In terms of assembly, homodimer. A divalent metal cation serves as cofactor.

It catalyses the reaction FMN + ATP + H(+) = FAD + diphosphate. The protein operates within cofactor biosynthesis; FAD biosynthesis; FAD from FMN: step 1/1. Functionally, catalyzes the transfer of the AMP portion of ATP to flavin mononucleotide (FMN) to produce flavin adenine dinucleotide (FAD) coenzyme. This chain is FAD synthase, found in Methanospirillum hungatei JF-1 (strain ATCC 27890 / DSM 864 / NBRC 100397 / JF-1).